Here is a 326-residue protein sequence, read N- to C-terminus: Nicotianamine synthase 2 (326 aa).

Belongs to the nicotianamine synthase (NAS)-like family. In terms of tissue distribution, expressed in roots.

The enzyme catalyses 3 S-adenosyl-L-methionine = nicotianamine + 3 S-methyl-5'-thioadenosine + 3 H(+). Its function is as follows. Synthesizes nicotianamine, a polyamine that is the first intermediate in the synthesis of the phytosiderophores of the mugineic acid type found in gramineae which serve as a sensor for the physiological iron status within the plant, and/or might be involved in the transport of iron. This Oryza sativa subsp. indica (Rice) protein is Nicotianamine synthase 2 (NAS2).